Consider the following 327-residue polypeptide: Glycerol-3-phosphate dehydrogenase [NAD(P)+] (327 aa).

NADPH-binding residues include W15, R35, and K109. Residues K109, G137, and S139 each coordinate sn-glycerol 3-phosphate. A141 contacts NADPH. Positions 192, 245, 255, 256, and 257 each coordinate sn-glycerol 3-phosphate. K192 serves as the catalytic Proton acceptor. Residue R256 coordinates NADPH. The NADPH site is built by L275 and E277.

The protein belongs to the NAD-dependent glycerol-3-phosphate dehydrogenase family.

Its subcellular location is the cytoplasm. The catalysed reaction is sn-glycerol 3-phosphate + NAD(+) = dihydroxyacetone phosphate + NADH + H(+). The enzyme catalyses sn-glycerol 3-phosphate + NADP(+) = dihydroxyacetone phosphate + NADPH + H(+). The protein operates within membrane lipid metabolism; glycerophospholipid metabolism. In terms of biological role, catalyzes the reduction of the glycolytic intermediate dihydroxyacetone phosphate (DHAP) to sn-glycerol 3-phosphate (G3P), the key precursor for phospholipid synthesis. This Chelativorans sp. (strain BNC1) protein is Glycerol-3-phosphate dehydrogenase [NAD(P)+].